The following is a 490-amino-acid chain: Tryptophan 5-hydroxylase 2 (490 aa).

The residue at position 19 (Ser19) is a Phosphoserine. The interval Leu34–Gly62 is disordered. Positions Lys50–Gly62 are enriched in polar residues. The ACT domain maps to Ala65 to Asn140. Fe cation contacts are provided by His318, His323, and Glu363.

Belongs to the biopterin-dependent aromatic amino acid hydroxylase family. As to quaternary structure, interacts with DNAJC12. The cofactor is Fe(2+).

The catalysed reaction is (6R)-L-erythro-5,6,7,8-tetrahydrobiopterin + L-tryptophan + O2 = 5-hydroxy-L-tryptophan + (4aS,6R)-4a-hydroxy-L-erythro-5,6,7,8-tetrahydrobiopterin. Its pathway is aromatic compound metabolism; serotonin biosynthesis; serotonin from L-tryptophan: step 1/2. In Macaca mulatta (Rhesus macaque), this protein is Tryptophan 5-hydroxylase 2 (TPH2).